A 121-amino-acid polypeptide reads, in one-letter code: Basic phospholipase A2 CoaTx-II (121 aa).

7 disulfides stabilise this stretch: cysteine 26–cysteine 115, cysteine 28–cysteine 44, cysteine 43–cysteine 95, cysteine 49–cysteine 121, cysteine 50–cysteine 88, cysteine 57–cysteine 81, and cysteine 75–cysteine 86. The segment at lysine 105–lysine 117 is important for membrane-damaging activities in eukaryotes and bacteria; heparin-binding.

The protein belongs to the phospholipase A2 family. Group II subfamily. K49 sub-subfamily. As to quaternary structure, homodimer; non-covalently-linked. Expressed by the venom gland.

The protein localises to the secreted. Its function is as follows. Snake venom phospholipase A2 (PLA2) that lacks enzymatic inactivity. It shows antibacterial activity against both Gram-negative and Gram-positive bacteria, including methicillin-resistant strains. In vivo, it causes local muscular damage, but no systemic damage (intravenous administration does not elevate plasma creatine kinase). Also causes an inflammatory activity that is demonstrated by mice paw edema induction and pro-inflammatory cytokine IL-6 elevation. A model of myotoxic mechanism has been proposed: an apo Lys49-PLA2 is activated by the entrance of a hydrophobic molecule (e.g. fatty acid) at the hydrophobic channel of the protein leading to a reorientation of a monomer. This reorientation causes a transition between 'inactive' to 'active' states, causing alignment of C-terminal and membrane-docking sites (MDoS) side-by-side and putting the membrane-disruption sites (MDiS) in the same plane, exposed to solvent and in a symmetric position for both monomers. The MDoS region stabilizes the toxin on membrane by the interaction of charged residues with phospholipid head groups. Subsequently, the MDiS region destabilizes the membrane with penetration of hydrophobic residues. This insertion causes a disorganization of the membrane, allowing an uncontrolled influx of ions (i.e. calcium and sodium), and eventually triggering irreversible intracellular alterations and cell death. The sequence is that of Basic phospholipase A2 CoaTx-II from Crotalus lutosus abyssus (Grand Canyon rattlesnake).